The following is a 192-amino-acid chain: MKLVVGLGNPGEEYARTRHNVGFVVADRLAQLAGASFSAKKFAAELAEARLGPERVWIMKPQTYMNHSGEAVGAALRFWKLGLDDLVVVHDDLELDPYRVQLKVGGGHGGHNGVKSVNAHVGSPEYARVRVGVGRPPPRMDPADYVLGKFAKGEDAELDLCVEQAVEATRLAVELGAARAMNQVNRRSRAAD.

Residue Tyr14 participates in tRNA binding. His19 serves as the catalytic Proton acceptor. Residues Tyr64, Asn66, and Asn112 each coordinate tRNA.

It belongs to the PTH family. Monomer.

It is found in the cytoplasm. The catalysed reaction is an N-acyl-L-alpha-aminoacyl-tRNA + H2O = an N-acyl-L-amino acid + a tRNA + H(+). Its function is as follows. Hydrolyzes ribosome-free peptidyl-tRNAs (with 1 or more amino acids incorporated), which drop off the ribosome during protein synthesis, or as a result of ribosome stalling. Catalyzes the release of premature peptidyl moieties from peptidyl-tRNA molecules trapped in stalled 50S ribosomal subunits, and thus maintains levels of free tRNAs and 50S ribosomes. In Anaeromyxobacter dehalogenans (strain 2CP-1 / ATCC BAA-258), this protein is Peptidyl-tRNA hydrolase.